The primary structure comprises 434 residues: Probable carboxypeptidase BDBG_01803 (434 aa).

The N-terminal stretch at 1 to 20 (MKLSHLAAALSAQLVAPVAA) is a signal peptide. N-linked (GlcNAc...) asparagine glycans are attached at residues Asn35, Asn136, and Asn150. Asp160 contacts Zn(2+). Glu192 (proton acceptor) is an active-site residue. Glu193 is a Zn(2+) binding site. Asn343 is a glycosylation site (N-linked (GlcNAc...) asparagine).

It belongs to the peptidase M20A family. It depends on Zn(2+) as a cofactor.

The protein resides in the secreted. The polypeptide is Probable carboxypeptidase BDBG_01803 (Blastomyces gilchristii (strain SLH14081) (Blastomyces dermatitidis)).